A 344-amino-acid polypeptide reads, in one-letter code: N-acetyl-gamma-glutamyl-phosphate reductase (344 aa).

C149 is a catalytic residue.

Belongs to the NAGSA dehydrogenase family. Type 1 subfamily.

It is found in the cytoplasm. The catalysed reaction is N-acetyl-L-glutamate 5-semialdehyde + phosphate + NADP(+) = N-acetyl-L-glutamyl 5-phosphate + NADPH + H(+). It functions in the pathway amino-acid biosynthesis; L-arginine biosynthesis; N(2)-acetyl-L-ornithine from L-glutamate: step 3/4. In terms of biological role, catalyzes the NADPH-dependent reduction of N-acetyl-5-glutamyl phosphate to yield N-acetyl-L-glutamate 5-semialdehyde. The protein is N-acetyl-gamma-glutamyl-phosphate reductase of Shouchella clausii (strain KSM-K16) (Alkalihalobacillus clausii).